The primary structure comprises 512 residues: UDP-N-acetylglucosamine--peptide N-acetylglucosaminyltransferase GtfA subunit (512 aa).

Gly16–Tyr19 contributes to the UDP binding site. Residue His251 participates in N-acetyl-D-glucosamine binding. Residues Gln393–His394 and Glu413–Gly416 contribute to the UDP site.

The protein belongs to the glycosyltransferase group 1 family. Glycosyltransferase 4 subfamily. Forms a heterotetramer with 2 subunits each of GtfA and GtfB. Part of the accessory SecA2/SecY2 protein translocation apparatus.

It localises to the cytoplasm. The protein localises to the cell membrane. The catalysed reaction is L-seryl-[protein] + UDP-N-acetyl-alpha-D-glucosamine = 3-O-[N-acetyl-alpha-D-glucosaminyl]-L-seryl-[protein] + UDP + H(+). It participates in protein modification; protein glycosylation. Its function is as follows. Required for polymorphic O-glycosylation of the serine-rich repeat protein (SRRP) in this bacteria. Catalyzes the first step in glycosylation by transferring N-acetylglucosamine from UDP-GlcNAc to serine residues in the substrate protein. Part of the accessory SecA2/SecY2 system specifically required to export serine-rich repeat cell wall proteins encoded in the same operon. The GtfA-GtfB complex adds GlcNAc from UDP-GlcNAc to SRRP (experimentally characterized with a truncated SSR1 construct); the alpha linkage was shown for this enzyme but not the residues glycosylated on SRRP. In Limosilactobacillus reuteri subsp. suis (strain ATCC 53608 / LMG 31752 / 1063) (Lactobacillus reuteri), this protein is UDP-N-acetylglucosamine--peptide N-acetylglucosaminyltransferase GtfA subunit.